The chain runs to 382 residues: Methylthioribose-1-phosphate isomerase (382 aa).

The Proton donor role is filled by D257.

It belongs to the eIF-2B alpha/beta/delta subunits family. MtnA subfamily.

Its subcellular location is the cytoplasm. The protein localises to the nucleus. The catalysed reaction is 5-(methylsulfanyl)-alpha-D-ribose 1-phosphate = 5-(methylsulfanyl)-D-ribulose 1-phosphate. Its pathway is amino-acid biosynthesis; L-methionine biosynthesis via salvage pathway; L-methionine from S-methyl-5-thio-alpha-D-ribose 1-phosphate: step 1/6. Catalyzes the interconversion of methylthioribose-1-phosphate (MTR-1-P) into methylthioribulose-1-phosphate (MTRu-1-P). The chain is Methylthioribose-1-phosphate isomerase from Paracoccidioides brasiliensis (strain Pb18).